The primary structure comprises 232 residues: Zinc import ATP-binding protein ZnuC (232 aa).

The ABC transporter domain occupies Val-5–Tyr-220. Gly-37–Ser-44 is a binding site for ATP.

It belongs to the ABC transporter superfamily. Zinc importer (TC 3.A.1.15.5) family. As to quaternary structure, the complex is composed of two ATP-binding proteins (ZnuC), two transmembrane proteins (ZnuB) and a solute-binding protein (ZnuA).

The protein localises to the cell membrane. It carries out the reaction Zn(2+)(out) + ATP(in) + H2O(in) = Zn(2+)(in) + ADP(in) + phosphate(in) + H(+)(in). In terms of biological role, part of the ABC transporter complex ZnuABC involved in zinc import. Responsible for energy coupling to the transport system. The chain is Zinc import ATP-binding protein ZnuC from Wigglesworthia glossinidia brevipalpis.